The sequence spans 453 residues: Chromosomal replication initiator protein DnaA (453 aa).

Residues 1–78 (MTENEQLFWN…FEIFNAEITA (78 aa)) are domain I, interacts with DnaA modulators. A domain II region spans residues 78-112 (ANYVSNDLHLQETSFSNYQQSSNEVNTLPIRKIDS). The domain III, AAA+ region stretch occupies residues 113–331 (NLKEKYTFAN…GALKNISLVA (219 aa)). Residues glycine 157, glycine 159, lysine 160, and threonine 161 each contribute to the ATP site. The domain IV, binds dsDNA stretch occupies residues 332-453 (DFKHAKTITV…EIETIKNKIR (122 aa)).

The protein belongs to the DnaA family. In terms of assembly, oligomerizes as a right-handed, spiral filament on DNA at oriC.

Its subcellular location is the cytoplasm. In terms of biological role, plays an essential role in the initiation and regulation of chromosomal replication. ATP-DnaA binds to the origin of replication (oriC) to initiate formation of the DNA replication initiation complex once per cell cycle. Binds the DnaA box (a 9 base pair repeat at the origin) and separates the double-stranded (ds)DNA. Forms a right-handed helical filament on oriC DNA; dsDNA binds to the exterior of the filament while single-stranded (ss)DNA is stabiized in the filament's interior. The ATP-DnaA-oriC complex binds and stabilizes one strand of the AT-rich DNA unwinding element (DUE), permitting loading of DNA polymerase. After initiation quickly degrades to an ADP-DnaA complex that is not apt for DNA replication. Binds acidic phospholipids. This chain is Chromosomal replication initiator protein DnaA, found in Streptococcus agalactiae serotype Ia (strain ATCC 27591 / A909 / CDC SS700).